An 87-amino-acid chain; its full sequence is Omega-lycotoxin-Am1g (87 aa).

The first 17 residues, 1–17 (MKLSIFFVLFFIAIAYC), serve as a signal peptide directing secretion. Residues 18–40 (QPEFLDDEEDEVEETLPVAEEGR) constitute a propeptide that is removed on maturation. 4 disulfide bridges follow: cysteine 44–cysteine 59, cysteine 51–cysteine 64, cysteine 58–cysteine 84, and cysteine 66–cysteine 82.

This sequence belongs to the neurotoxin omega-lctx family. In terms of tissue distribution, expressed by the venom gland.

It localises to the secreted. Its function is as follows. Modulates Cav2.1/CACNA1A voltage-gated calcium channels (P/Q-type currents) in rat cerebellar Purkinje cells and hippocampal CA1-CA3 neurons. At saturating concentrations (&gt;10 nM) decelerates activation kinetics and slightly increases peak amplitude without affecting deactivation kinetics. In vivo, does not cause death when intravenously injected into mice. In rat models, through its activity on Cav2.1/CACNA1A, has an ameliorative effect on memory defects provoked by hyperstimulation of N-methyl-D-aspartate receptors (NMDARs) in the hippocampus. This Alopecosa marikovskyi (Wolf spider) protein is Omega-lycotoxin-Am1g.